We begin with the raw amino-acid sequence, 858 residues long: Leucine--tRNA ligase (858 aa).

Positions Pro-42–His-52 match the 'HIGH' region motif. Positions Asn-584–Ile-594 are enriched in polar residues. Positions Asn-584–Glu-611 are disordered. The 'KMSKS' region motif lies at Thr-619–Ser-623. Lys-622 lines the ATP pocket.

Belongs to the class-I aminoacyl-tRNA synthetase family.

The protein resides in the cytoplasm. The catalysed reaction is tRNA(Leu) + L-leucine + ATP = L-leucyl-tRNA(Leu) + AMP + diphosphate. The protein is Leucine--tRNA ligase of Cyanothece sp. (strain PCC 7425 / ATCC 29141).